A 302-amino-acid polypeptide reads, in one-letter code: Putative S-adenosyl-L-methionine-dependent methyltransferase MAB_4586c (302 aa).

S-adenosyl-L-methionine contacts are provided by residues Asp122 and 151 to 152 (DL).

Belongs to the UPF0677 family.

Functionally, exhibits S-adenosyl-L-methionine-dependent methyltransferase activity. The protein is Putative S-adenosyl-L-methionine-dependent methyltransferase MAB_4586c of Mycobacteroides abscessus (strain ATCC 19977 / DSM 44196 / CCUG 20993 / CIP 104536 / JCM 13569 / NCTC 13031 / TMC 1543 / L948) (Mycobacterium abscessus).